The chain runs to 537 residues: Putative cysteine ligase BshC (537 aa).

Positions 422–450 form a coiled coil; that stretch reads IEKVEGMIEQQRRLNKDLLDEVAGNQNNI.

This sequence belongs to the BshC family.

Functionally, involved in bacillithiol (BSH) biosynthesis. May catalyze the last step of the pathway, the addition of cysteine to glucosamine malate (GlcN-Mal) to generate BSH. This Staphylococcus aureus (strain COL) protein is Putative cysteine ligase BshC.